The sequence spans 468 residues: 3-isopropylmalate dehydratase large subunit (468 aa).

[4Fe-4S] cluster contacts are provided by cysteine 346, cysteine 406, and cysteine 409.

The protein belongs to the aconitase/IPM isomerase family. LeuC type 1 subfamily. Heterodimer of LeuC and LeuD. [4Fe-4S] cluster is required as a cofactor.

The enzyme catalyses (2R,3S)-3-isopropylmalate = (2S)-2-isopropylmalate. Its pathway is amino-acid biosynthesis; L-leucine biosynthesis; L-leucine from 3-methyl-2-oxobutanoate: step 2/4. Its function is as follows. Catalyzes the isomerization between 2-isopropylmalate and 3-isopropylmalate, via the formation of 2-isopropylmaleate. In Pseudoalteromonas atlantica (strain T6c / ATCC BAA-1087), this protein is 3-isopropylmalate dehydratase large subunit.